Reading from the N-terminus, the 617-residue chain is Urocanate reductase (617 aa).

Position 70 is an FMN phosphoryl threonine (Thr70). Residues Ala124, Glu143, Asn151, Thr152, Gly156, Gly157, and Asp387 each coordinate FAD. Residue Arg446 is the Proton donor of the active site. Positions 553, 582, and 598 each coordinate FAD.

This sequence belongs to the FAD-dependent oxidoreductase 2 family. FRD/SDH subfamily. FAD serves as cofactor. It depends on FMN as a cofactor.

It catalyses the reaction dihydrourocanate + A = urocanate + AH2. Its function is as follows. Catalyzes the two-electron reduction of urocanate to dihydrourocanate (also named imidazole propionate or deamino-histidine). Dihydrourocanate is present at higher concentrations in subjects with type 2 diabetes, and directly impairs glucose tolerance and insulin signaling at the level of insulin receptor substrate (IRS) through activation of p38 gamma (MAPK12)-p62-mTORC1. Therefore, the UrdA enzyme from the gut bacteria L.fermentum strain NBRC 3956 may contribute to the pathogenesis of type 2 diabetes by producing the microbial metabolite dihydrourocanate. This chain is Urocanate reductase, found in Limosilactobacillus fermentum (strain NBRC 3956 / LMG 18251) (Lactobacillus fermentum).